A 256-amino-acid chain; its full sequence is Chalcone--flavanone isomerase (256 aa).

The substrate site is built by Thr-51, Asn-116, and Ser-193. The interval Asn-219–Val-256 is disordered. The span at Glu-228–Val-256 shows a compositional bias: basic and acidic residues.

It belongs to the chalcone isomerase family. Nodules.

It catalyses the reaction a chalcone = a flavanone.. The protein operates within secondary metabolite biosynthesis; flavonoid biosynthesis. Its function is as follows. Catalyzes the intramolecular cyclization of bicyclic chalcones into tricyclic (S)-flavanones. Responsible for the isomerization of 4,2',4',6'-tetrahydroxychalcone (also termed chalcone) into naringenin. The chain is Chalcone--flavanone isomerase (CHI) from Elaeagnus umbellata (Autumn olive).